Consider the following 107-residue polypeptide: Protein phosphatase 1 regulatory subunit INH3 (107 aa).

The span at 1-14 (MSTATRPSSSATTS) shows a compositional bias: low complexity. Disordered stretches follow at residues 1 to 40 (MSTA…KKKK) and 69 to 107 (PFDE…KAVD). A compositionally biased stretch (acidic residues) spans 71 to 80 (DEDDSEEEDD). The segment covering 81-94 (NNHHCDHNHEHSES) has biased composition (basic and acidic residues). Over residues 95-107 (GEASSSNDSKAVD) the composition is skewed to low complexity.

In terms of assembly, interacts with protein phosphatase 1. Expressed in roots, cotyledons, leaves, flowers and embryos.

Its function is as follows. Inhibitor of protein-phosphatase 1 (PP1). Binds to and inhibits PP1 activity. Required for early embryogenesis progression. The polypeptide is Protein phosphatase 1 regulatory subunit INH3 (Arabidopsis thaliana (Mouse-ear cress)).